The sequence spans 145 residues: Antiholin-like protein LrgA (145 aa).

Transmembrane regions (helical) follow at residues 10-30 (PAHF…SKII), 33-53 (FMPI…VLLC), 72-92 (NIGL…GVIS), and 96-116 (FLII…TGYV).

Belongs to the CidA/LrgA family. LrgA subfamily.

The protein resides in the cell membrane. Inhibits the expression or activity of extracellular murein hydrolases by interacting, possibly with LrgB, with the holin-like proteins CidA and/or CidB. The LrgAB and CidAB proteins may affect the proton motive force of the membrane. May be involved in programmed cell death (PCD), possibly triggering PCD in response to antibiotics and environmental stresses. This chain is Antiholin-like protein LrgA, found in Staphylococcus aureus (strain Mu3 / ATCC 700698).